Here is a 711-residue protein sequence, read N- to C-terminus: Cyclomaltodextrin glucanotransferase (711 aa).

An N-terminal signal peptide occupies residues 1–31; it reads MRRWLSLVLSMSFVFSAIFIVSDTQKVTVEA. The A1 stretch occupies residues 32-165; it reads AGNLNKVNFT…GIKVIIDFAP (134 aa). Ca(2+) contacts are provided by Asp-55, Asn-57, Asn-60, and Asn-61. The cysteines at positions 71 and 78 are disulfide-linked. Residues Gly-79 and Asp-81 each contribute to the Ca(2+) site. 127 to 128 contacts substrate; the sequence is YW. Asn-166 serves as a coordination point for Ca(2+). Residues 166–229 are b; sequence NHTSPASETN…NLFDLADLNH (64 aa). His-167 contributes to the substrate binding site. Residue Ile-217 participates in Ca(2+) binding. 220-223 provides a ligand contact to substrate; the sequence is NLFD. Position 226 (Asp-226) interacts with Ca(2+). Positions 230-433 are A2; it reads QNPVIDRYLK…LRRNNPALAY (204 aa). Arg-254 lines the substrate pocket. Asp-256 (nucleophile) is an active-site residue. Position 259 to 260 (259 to 260) interacts with substrate; it reads KH. Residue His-260 participates in Ca(2+) binding. Glu-284 serves as the catalytic Proton donor. Residues His-354, Asp-398, and Arg-402 each contribute to the substrate site. The segment at 434-522 is c; sequence GDTEQRWING…EVGVWAYSAT (89 aa). The d stretch occupies residues 523 to 606; that stretch reads ESTPIIGHVG…SAAYDNFEVL (84 aa). The IPT/TIG domain occupies 526-604; the sequence is PIIGHVGPMM…QTSAAYDNFE (79 aa). A CBM20 domain is found at 605-711; sequence VLTNDQVSVR…TGKIIVDWQN (107 aa). Residues 607–711 are e; the sequence is TNDQVSVRFV…TGKIIVDWQN (105 aa).

The protein belongs to the glycosyl hydrolase 13 family. In terms of assembly, monomer. Requires Ca(2+) as cofactor.

It localises to the secreted. The catalysed reaction is Cyclizes part of a (1-&gt;4)-alpha-D-glucan chain by formation of a (1-&gt;4)-alpha-D-glucosidic bond.. In Geobacillus stearothermophilus (Bacillus stearothermophilus), this protein is Cyclomaltodextrin glucanotransferase (cgt).